A 105-amino-acid polypeptide reads, in one-letter code: Secreted RxLR effector protein 158 (105 aa).

A signal peptide spans 1-22 (MRGAHYVAIVLLVAAGGQTAAG). The short motif at 50 to 71 (RALQASRNPKDDLMFSAGDEER) is the RxLR-dEER element.

The protein belongs to the RxLR effector family.

Its subcellular location is the secreted. It localises to the host nucleus. The protein resides in the host cytoplasm. Functionally, secreted effector that partially suppresses the host cell death induced by cell death-inducing proteins. This is Secreted RxLR effector protein 158 from Plasmopara viticola (Downy mildew of grapevine).